Here is a 332-residue protein sequence, read N- to C-terminus: Beta-ketoacyl-[acyl-carrier-protein] synthase III 2 (332 aa).

Active-site residues include C115 and H252. Positions 253 to 257 (SANLR) are ACP-binding. Residue N282 is part of the active site.

It belongs to the thiolase-like superfamily. FabH family. As to quaternary structure, homodimer.

Its subcellular location is the cytoplasm. The catalysed reaction is malonyl-[ACP] + acetyl-CoA + H(+) = 3-oxobutanoyl-[ACP] + CO2 + CoA. Its pathway is lipid metabolism; fatty acid biosynthesis. Catalyzes the condensation reaction of fatty acid synthesis by the addition to an acyl acceptor of two carbons from malonyl-ACP. Catalyzes the first condensation reaction which initiates fatty acid synthesis and may therefore play a role in governing the total rate of fatty acid production. Possesses both acetoacetyl-ACP synthase and acetyl transacylase activities. Its substrate specificity determines the biosynthesis of branched-chain and/or straight-chain of fatty acids. The sequence is that of Beta-ketoacyl-[acyl-carrier-protein] synthase III 2 from Halalkalibacterium halodurans (strain ATCC BAA-125 / DSM 18197 / FERM 7344 / JCM 9153 / C-125) (Bacillus halodurans).